Here is a 120-residue protein sequence, read N- to C-terminus: 5-hydroxyisourate hydrolase 2 (120 aa).

Positions 10, 48, and 117 each coordinate substrate.

Belongs to the transthyretin family. 5-hydroxyisourate hydrolase subfamily. Homotetramer.

The catalysed reaction is 5-hydroxyisourate + H2O = 5-hydroxy-2-oxo-4-ureido-2,5-dihydro-1H-imidazole-5-carboxylate + H(+). Its function is as follows. Catalyzes the hydrolysis of 5-hydroxyisourate (HIU) to 2-oxo-4-hydroxy-4-carboxy-5-ureidoimidazoline (OHCU). This Rhizobium meliloti (strain 1021) (Ensifer meliloti) protein is 5-hydroxyisourate hydrolase 2.